Here is a 524-residue protein sequence, read N- to C-terminus: MALQKFPLLGLLFLITIVVSSTIAVDDPVCPTTSKLSRASFPNGFVFGTATAAFQVEGAINETCRGPALWDIFCKRNPERCSGHNADVAVDFFHRYKEDIQLMKNLNTDAFRLSIAWSRIFPHGRKEKGVSQAGVKFYHDLIDELLKNGIIPFVTVFHWDTPQDLEDEYGGFLSENIVKDFREYADYVFTEYGGKVKNWITFNEPWVFAHAGYDVGKKAPGRCSRYLKGCEDRDGRSGYEAYLVSHNLLNAHAEAVEVFRQKVKGGKIGIAHSPAWFEPHDLKDSNDVPTVSRVLDFMLGWHLDPTTFGDYPQIMKDLLGHRLPKFTSSQKAKLKDSTDFVGLNYYTSTFSNHNEKPDPSTPSWKQDSLVAWEPKNVDHSAIGSQPLTAALPVYAKGFRSLLKYIKDKYANPEIMIMENGYGDKLKDKDSVEVGTADYNRKYYLQRHLLAMNEAICIDKVRVTGYFVWSLLDNFEWQDGYNNRFGLYYVDFKNNLTRYEKESAKYYKDFLGQGVRPSALKKDEL.

The signal sequence occupies residues 1-24; that stretch reads MALQKFPLLGLLFLITIVVSSTIA. Glutamine 55 contacts a beta-D-glucoside. A glycan (N-linked (GlcNAc...) asparagine) is linked at asparagine 61. A beta-D-glucoside-binding positions include histidine 158 and 203 to 204; that span reads NE. Glutamate 204 acts as the Proton donor in catalysis. Cysteine 223 and cysteine 230 are oxidised to a cystine. Residues tyrosine 346, glutamate 418, tryptophan 468, 475–476, and phenylalanine 484 contribute to the a beta-D-glucoside site; that span reads EW. Glutamate 418 functions as the Nucleophile in the catalytic mechanism. Asparagine 494 carries an N-linked (GlcNAc...) asparagine glycan. The Prevents secretion from ER motif lies at 521 to 524; that stretch reads KDEL.

This sequence belongs to the glycosyl hydrolase 1 family. In terms of assembly, component of the PYK10 complex, at least composed of PYK10/BGLU23, BGLU21, BGLU22, JAL22, JAL23, PBP1/JAL30, PBP2/JAL31, JAL32, JAL33, JAL34, JAL35, GLL22 and GLL23. As to expression, expressed exclusively in roots.

It is found in the endoplasmic reticulum lumen. The enzyme catalyses Hydrolysis of terminal, non-reducing beta-D-glucosyl residues with release of beta-D-glucose.. Activated upon binding to PBP1 or PBP2. Beta-D-glucosidase active on scopolin &gt;&gt; esculin &gt;&gt; 4-MU-glucoside. No activity with DIMBOA-glucoside, pNP-glucoside, oNP-glucoside and sinigrin as substrates. This chain is Beta-glucosidase 22, found in Arabidopsis thaliana (Mouse-ear cress).